Reading from the N-terminus, the 541-residue chain is Tetratricopeptide repeat protein 8 (541 aa).

One copy of the TPR 1 repeat lies at 14–47 (YFRRRKFQLCADLCTQMLEKSPYDQEPDPELPVH). A disordered region spans residues 118-137 (PITGFLRPSTQSGRPGTMEQ). TPR repeat units lie at residues 251–284 (WWWK…QEMV), 285–317 (DTFL…FPGE), 318–351 (VTLL…DNTH), 352–385 (VEAI…GIYN), 386–419 (GQLF…AENE), 423–456 (ADVW…NNNH), and 457–490 (AEAY…APHM).

Part of BBSome complex, that contains BBS1, BBS2, BBS4, BBS5, BBS7, BBS8/TTC8, BBS9 and BBIP10. Interacts with PCM1. Interacts with CCDC28B. Interacts with PKD1. In terms of tissue distribution, widely expressed.

The protein resides in the cytoplasm. It localises to the cytoskeleton. The protein localises to the microtubule organizing center. It is found in the centrosome. Its subcellular location is the cell projection. The protein resides in the cilium membrane. It localises to the centriolar satellite. The protein localises to the cilium. In terms of biological role, the BBSome complex is thought to function as a coat complex required for sorting of specific membrane proteins to the primary cilia. The BBSome complex is required for ciliogenesis but is dispensable for centriolar satellite function. This ciliogenic function is mediated in part by the Rab8 GDP/GTP exchange factor, which localizes to the basal body and contacts the BBSome. Rab8(GTP) enters the primary cilium and promotes extension of the ciliary membrane. Firstly the BBSome associates with the ciliary membrane and binds to RAB3IP/Rabin8, the guanosyl exchange factor (GEF) for Rab8 and then the Rab8-GTP localizes to the cilium and promotes docking and fusion of carrier vesicles to the base of the ciliary membrane. The BBSome complex, together with the LTZL1, controls SMO ciliary trafficking and contributes to the sonic hedgehog (SHH) pathway regulation. Required for proper BBSome complex assembly and its ciliary localization. The protein is Tetratricopeptide repeat protein 8 (TTC8) of Homo sapiens (Human).